Consider the following 403-residue polypeptide: MTESTFPQYPRLVLSKGREKSLLRRHPWVFSGAVSRLEGKANLGETIDIVDHQGKWLARGAWSPASQIRARVWTFDKAESIDIAFFTRRLRQAQQWRDWLAKKDGLDSYRLIAGESDGLPGVTIDRFGYFLVLQLLSAGAEYQRAALISALQTCYPDCAIYDRSDVAVRKKEGMALTQGPVTGELPPALLPIEEHGMKLLVDIQGGHKTGYYLDQRDSRLATRRYVENQRVLNCFSYTGGFAVSALMGGCRQVVSVDTSQDALDIARQNVELNQLDLSKAEFVRDDVFKLLRAYREHGEKFDVIIMDPPKFVENKSQLMGACRGYKDINMLAIQLLNPGGILLTFSCSGLMTSDLFQKIIADAAIDAGRDVQFIEQFRQAADHPVIATYPEGLYLKGFACRVM.

A PUA domain is found at 9–88; the sequence is YPRLVLSKGR…ESIDIAFFTR (80 aa).

It belongs to the methyltransferase superfamily. RlmI family.

It is found in the cytoplasm. It carries out the reaction cytidine(1962) in 23S rRNA + S-adenosyl-L-methionine = 5-methylcytidine(1962) in 23S rRNA + S-adenosyl-L-homocysteine + H(+). In terms of biological role, specifically methylates the cytosine at position 1962 (m5C1962) of 23S rRNA. The polypeptide is Ribosomal RNA large subunit methyltransferase I (Salmonella paratyphi A (strain ATCC 9150 / SARB42)).